The chain runs to 500 residues: L-arabinose isomerase (500 aa).

E306, E333, H349, and H448 together coordinate Mn(2+).

This sequence belongs to the arabinose isomerase family. Requires Mn(2+) as cofactor.

The catalysed reaction is beta-L-arabinopyranose = L-ribulose. The protein operates within carbohydrate degradation; L-arabinose degradation via L-ribulose; D-xylulose 5-phosphate from L-arabinose (bacterial route): step 1/3. Catalyzes the conversion of L-arabinose to L-ribulose. In Saccharophagus degradans (strain 2-40 / ATCC 43961 / DSM 17024), this protein is L-arabinose isomerase.